The following is a 324-amino-acid chain: Probable carboxylesterase 9 (324 aa).

The short motif at 86–88 (HGS) is the Involved in the stabilization of the negatively charged intermediate by the formation of the oxyanion hole element. Catalysis depends on residues serine 171, aspartate 272, and histidine 302.

Belongs to the 'GDXG' lipolytic enzyme family. In terms of tissue distribution, expressed in flowers.

It catalyses the reaction a carboxylic ester + H2O = an alcohol + a carboxylate + H(+). In terms of biological role, carboxylesterase acting on esters with varying acyl chain length. The sequence is that of Probable carboxylesterase 9 (CXE9) from Arabidopsis thaliana (Mouse-ear cress).